Consider the following 203-residue polypeptide: Endo-type membrane-bound lytic murein transglycosylase A (203 aa).

The signal sequence occupies residues 1 to 15; that stretch reads MKLRWFAFLVVILAG. Residue C16 is the site of N-palmitoyl cysteine attachment. C16 carries the S-diacylglycerol cysteine lipid modification.

This sequence belongs to the transglycosylase Slt family.

It localises to the cell outer membrane. The enzyme catalyses Endolytic cleavage of the (1-&gt;4)-beta-glycosidic linkage between N-acetylmuramic acid (MurNAc) and N-acetylglucosamine (GlcNAc) residues in peptidoglycan with concomitant formation of a 1,6-anhydrobond in the MurNAc residue.. Murein-degrading enzyme. May play a role in recycling of muropeptides during cell elongation and/or cell division. Preferentially cleaves at a distance of more than two disaccharide units from the ends of the glycan chain. The protein is Endo-type membrane-bound lytic murein transglycosylase A of Salmonella paratyphi C (strain RKS4594).